A 1532-amino-acid polypeptide reads, in one-letter code: MGHSKQIRILLLNEMEKLEKTLFRLEQGYELQFRLGPTLQGKAVTVYTNYPFPGETFNREKFRSLDWENPTEREDDSDKYCKLNLQQSGSFQYYFLQGNEKSGGGYIVVDPILRVGADNHVLPLDCVTLQTFLAKCLGPFDEWESRLRVAKESGYNMIHFTPLQTLGLSRSCYSLANQLELNPDFSRPNRKYTWNDVGQLVEKLKKEWNVICITDVVYNHTAANSKWIQEHPECAYNLVNSPHLKPAWVLDRALWRFSCDVAEGKYKEKGIPALIENDHHMNSIRKIIWEDIFPKLKLWEFFQVDVNKAVEQFRRLLTQENRRVTKSDPNQHLTIIQDPEYRRFGCTVDMNIALTTFIPHDKGPAAIEECCNWFHKRMEELNSEKHRLINYHQEQAVNCLLGNVFYERLAGHGPKLGPVTRKHPLVTRYFTFPFEEIDFSMEESMIHLPNKACFLMAHNGWVMGDDPLRNFAEPGSEVYLRRELICWGDSVKLRYGNKPEDCPYLWAHMKKYTEITATYFQGVRLDNCHSTPLHVAEYMLDAARNLQPNLYVVAELFTGSEDLDNVFVTRLGISSLIREAMSAYNSHEEGRLVYRYGGEPVGSFVQPCLRPLMPAIAHALFMDITHDNECPIVHRSAYDALPSTTIVSMACCASGSTRGYDELVPHQISVVSEERFYTKWNPEALPSNTGEVNFQSGIIAARCAISKLHQELGAKGFIQVYVDQVDEDIVAVTRHSPSIHQSVVAVSRTAFRNPKTSFYSKEVPQMCIPGKIEEVVLEARTIERNTKPYRKDENSINGTPDITVEIREHIQLNESKIVKQAGVATKGPNEYIQEIEFENLSPGSVIIFRVSLDPHAQVAVGILRNHLTQFSPHFKSGSLAVDNADPILKIPFASLASRLTLAELNQILYRCESEEKEDGGGCYDIPNWSALKYAGLQGLMSVLAEIRPKNDLGHPFCNNLRSGDWMIDYVSNRLISRSGTIAEVGKWLQAMFFYLKQIPRYLIPCYFDAILIGAYTTLLDTAWKQMSSFVQNGSTFVKHLSLGSVQLCGVGKFPSLPILSPALMDVPYRLNEITKEKEQCCVSLAAGLPHFSSGIFRCWGRDTFIALRGILLITGRYVEARNIILAFAGTLRHGLIPNLLGEGIYARYNCRDAVWWWLQCIQDYCKMVPNGLDILKCPVSRMYPTDDSAPLPAGTLDQPLFEVIQEAMQKHMQGIQFRERNAGPQIDRNMKDEGFNITAGVDEETGFVYGGNRFNCGTWMDKMGESDRARNRGIPATPRDGSAVEIVGLSKSAVRWLLELSKKNIFPYHEVTVKRHGKAIKVSYDEWNRKIQDNFEKLFHVSEDPSDLNEKHPNLVHKRGIYKDSYGASSPWCDYQLRPNFTIAMVVAPELFTTEKAWKALEIAEKKLLGPLGMKTLDPDDMVYCGIYDNALDNDNYNLAKGFNYHQGPEWLWPIGYFLRAKLYFSRLMGPETTAKTIVLVKNVLSRHYVHLERSPWKGLPELTNENAQYCPFSCETQAWSIATILETLYDL.

A Phosphoserine modification is found at S64. Active-site residues include D526, H529, and D627.

This sequence belongs to the glycogen debranching enzyme family. In terms of assembly, monomer. Interacts with NHLRC1/malin. Post-translationally, the N-terminus is blocked. Ubiquitinated. As to expression, liver, kidney and lymphoblastoid cells express predominantly isoform 1; whereas muscle and heart express not only isoform 1, but also muscle-specific isoform mRNAs (isoforms 2, 3 and 4). Isoforms 5 and 6 are present in both liver and muscle.

It is found in the cytoplasm. The catalysed reaction is Transfers a segment of a (1-&gt;4)-alpha-D-glucan to a new position in an acceptor, which may be glucose or a (1-&gt;4)-alpha-D-glucan.. The enzyme catalyses Hydrolysis of (1-&gt;6)-alpha-D-glucosidic branch linkages in glycogen phosphorylase limit dextrin.. Its function is as follows. Multifunctional enzyme acting as 1,4-alpha-D-glucan:1,4-alpha-D-glucan 4-alpha-D-glycosyltransferase and amylo-1,6-glucosidase in glycogen degradation. This chain is Glycogen debranching enzyme (AGL), found in Homo sapiens (Human).